Reading from the N-terminus, the 133-residue chain is S-adenosylmethionine decarboxylase proenzyme (133 aa).

Residue serine 63 is the Schiff-base intermediate with substrate; via pyruvic acid of the active site. At serine 63 the chain carries Pyruvic acid (Ser); by autocatalysis. The Proton acceptor; for processing activity role is filled by histidine 68. The active-site Proton donor; for catalytic activity is the cysteine 83.

The protein belongs to the prokaryotic AdoMetDC family. Type 1 subfamily. Heterotetramer of two alpha and two beta chains arranged as a dimer of alpha/beta heterodimers. Requires pyruvate as cofactor. Is synthesized initially as an inactive proenzyme. Formation of the active enzyme involves a self-maturation process in which the active site pyruvoyl group is generated from an internal serine residue via an autocatalytic post-translational modification. Two non-identical subunits are generated from the proenzyme in this reaction, and the pyruvate is formed at the N-terminus of the alpha chain, which is derived from the carboxyl end of the proenzyme. The post-translation cleavage follows an unusual pathway, termed non-hydrolytic serinolysis, in which the side chain hydroxyl group of the serine supplies its oxygen atom to form the C-terminus of the beta chain, while the remainder of the serine residue undergoes an oxidative deamination to produce ammonia and the pyruvoyl group blocking the N-terminus of the alpha chain.

It carries out the reaction S-adenosyl-L-methionine + H(+) = S-adenosyl 3-(methylsulfanyl)propylamine + CO2. It functions in the pathway amine and polyamine biosynthesis; S-adenosylmethioninamine biosynthesis; S-adenosylmethioninamine from S-adenosyl-L-methionine: step 1/1. Catalyzes the decarboxylation of S-adenosylmethionine to S-adenosylmethioninamine (dcAdoMet), the propylamine donor required for the synthesis of the polyamines spermine and spermidine from the diamine putrescine. The protein is S-adenosylmethionine decarboxylase proenzyme of Acidithiobacillus ferrooxidans (strain ATCC 23270 / DSM 14882 / CIP 104768 / NCIMB 8455) (Ferrobacillus ferrooxidans (strain ATCC 23270)).